Reading from the N-terminus, the 446-residue chain is N-succinylarginine dihydrolase (446 aa).

Substrate contacts are provided by residues 19-28 (AGLSFGNEAS), Asn-110, and 137-138 (HR). Glu-174 is an active-site residue. Arg-213 contacts substrate. His-249 is an active-site residue. Positions 251 and 364 each coordinate substrate. Catalysis depends on Cys-370, which acts as the Nucleophile.

This sequence belongs to the succinylarginine dihydrolase family. In terms of assembly, homodimer.

The catalysed reaction is N(2)-succinyl-L-arginine + 2 H2O + 2 H(+) = N(2)-succinyl-L-ornithine + 2 NH4(+) + CO2. The protein operates within amino-acid degradation; L-arginine degradation via AST pathway; L-glutamate and succinate from L-arginine: step 2/5. Functionally, catalyzes the hydrolysis of N(2)-succinylarginine into N(2)-succinylornithine, ammonia and CO(2). The sequence is that of N-succinylarginine dihydrolase from Acinetobacter baylyi (strain ATCC 33305 / BD413 / ADP1).